We begin with the raw amino-acid sequence, 92 residues long: DNA-directed RNA polymerase subunit omega (92 aa).

The protein belongs to the RNA polymerase subunit omega family. The RNAP catalytic core consists of 2 alpha, 1 beta, 1 beta' and 1 omega subunit. When a sigma factor is associated with the core the holoenzyme is formed, which can initiate transcription.

It catalyses the reaction RNA(n) + a ribonucleoside 5'-triphosphate = RNA(n+1) + diphosphate. In terms of biological role, promotes RNA polymerase assembly. Latches the N- and C-terminal regions of the beta' subunit thereby facilitating its interaction with the beta and alpha subunits. The sequence is that of DNA-directed RNA polymerase subunit omega from Shewanella sp. (strain ANA-3).